The following is a 278-amino-acid chain: MQIMLCAISNIASGGCGEDCKYCTQSAHVKTNINKYKRKDIDQIVLEAKMAKKNEALGFCLVTAGAGLDDEKLEYVCKVAHAVQKEVEGLLLIACNGIANLEQLKELKKAGIFSYNHNLETSKEFFPNICSTHTWEQRFQTNLYAKEVGLMLCCGGIYGLGESEADRKSFRASLKELDPFSSPINFFIPNENLKLKQALLDPDEALNIIKDTKKDLPNAHIMVAGGREVVLKERQYEIFDAGASAIVVGDYLTTKGEEPSKDIQKLKQMGFSFASSCH.

The Radical SAM core domain maps to 1–227 (MQIMLCAISN…NAHIMVAGGR (227 aa)). 3 residues coordinate [4Fe-4S] cluster: Cys16, Cys20, and Cys23. 3 residues coordinate [2Fe-2S] cluster: Cys60, Cys95, and Cys153.

This sequence belongs to the radical SAM superfamily. Biotin synthase family. As to quaternary structure, homodimer. [4Fe-4S] cluster is required as a cofactor. Requires [2Fe-2S] cluster as cofactor.

It catalyses the reaction (4R,5S)-dethiobiotin + (sulfur carrier)-SH + 2 reduced [2Fe-2S]-[ferredoxin] + 2 S-adenosyl-L-methionine = (sulfur carrier)-H + biotin + 2 5'-deoxyadenosine + 2 L-methionine + 2 oxidized [2Fe-2S]-[ferredoxin]. Its pathway is cofactor biosynthesis; biotin biosynthesis; biotin from 7,8-diaminononanoate: step 2/2. Catalyzes the conversion of dethiobiotin (DTB) to biotin by the insertion of a sulfur atom into dethiobiotin via a radical-based mechanism. This Campylobacter lari (strain RM2100 / D67 / ATCC BAA-1060) protein is Biotin synthase.